The sequence spans 848 residues: DNA mismatch repair protein MutS (848 aa).

610–617 (GPNMGGKS) contacts ATP.

The protein belongs to the DNA mismatch repair MutS family.

Functionally, this protein is involved in the repair of mismatches in DNA. It is possible that it carries out the mismatch recognition step. This protein has a weak ATPase activity. In Francisella philomiragia subsp. philomiragia (strain ATCC 25017 / CCUG 19701 / FSC 153 / O#319-036), this protein is DNA mismatch repair protein MutS.